The following is a 249-amino-acid chain: DNA polymerase sliding clamp (249 aa).

This sequence belongs to the PCNA family. Homotrimer. The subunits circularize to form a toroid; DNA passes through its center. Replication factor C (RFC) is required to load the toroid on the DNA.

Functionally, sliding clamp subunit that acts as a moving platform for DNA processing. Responsible for tethering the catalytic subunit of DNA polymerase and other proteins to DNA during high-speed replication. The sequence is that of DNA polymerase sliding clamp from Thermococcus sibiricus (strain DSM 12597 / MM 739).